The chain runs to 886 residues: MNLQELKQKYNYDVATKMMQQYLDIKFAHLDCLLLFRMGDFYEMFYEDAILASNVLGIALTKRGKNGEEEIAMCGVPYHALENYLTKLIEENYKVAICDQLETPEEAKNRGGYKAVVTRDVTRIITPGTIIEENLIASAEPNYLASLVIPKNKETASLCYVDLSTSEIVVVNVPETEILNELARLKPREILLSENLRSSNLADSIFKQLNFRITYQVDSFFAINKCKKIILDFYKMKDIKGIGEISSSQICAIGSVLEYLSLTQKQNIPHLPIPRIINFHSYMTIDFSTRRNLEIVTNSQGDSQGSLLSTLNHTVTKQGGRLLYNFLSSPLTNIAKINHRLNITEFFYSNLEIVKKIRELLKKTSDIERCLTRITMNRSSGRDLLSIKYTLETATIIKEVFFDAYGFNLPDFIEKIIKPLSGDAELYNLIDETIREDAPNNLNDGGIIKHEYHPKVAQLHDLINNGKLYIEKLKDQYRKETGIDSLKISHNNVIGLFIDITAKNVNKILDPKFIHRQTTVNHVRYTTAELQKLESELVNAKTLVISLEKELYADICSQVIEKASYLRMLASSLSGLDVFCNFAYIADEYDYVKPEFTDDLSFDIVKGRHPVVEKALQRESKSFVYNDCHLSELERIWLITGPNMAGKSTFLRQNAIIAIIAQIGSFVPAKSAKIGVVDKIFSRIGAADDLIKGQSTFMAEMLETSAILAQSTKNSLIILDEVGRGTSTYDGVSIAWSVLEYIHDKLKCRCLFATHYHELTVMSNFLPALQNYTIAIEESGKDILFLHNIISGAADRSYGLHVAALAGLPESVINRAEQILLKFEKTSTGKGKNILSTESNNLSLFYLEPNKTTISSKLDKKFSTIDPDKLSPKEALELIYELKKLV.

641-648 (GPNMAGKS) is an ATP binding site.

It belongs to the DNA mismatch repair MutS family.

Functionally, this protein is involved in the repair of mismatches in DNA. It is possible that it carries out the mismatch recognition step. This protein has a weak ATPase activity. The chain is DNA mismatch repair protein MutS from Rickettsia rickettsii (strain Sheila Smith).